Reading from the N-terminus, the 1383-residue chain is Cell surface hyaluronidase CEMIP2 (1383 aa).

Positions 1 to 50 are disordered; it reads MYATDSRGHSPAFLQPQNGNSRHPSGYVPGKVVPLRPPPPPKSQASAKFT. At 1 to 82 the chain is on the cytoplasmic side; that stretch reads MYATDSRGHS…SQKQKRHKNT (82 aa). Phosphoserine is present on residues serine 10 and serine 63. Residues 83–103 form a helical; Signal-anchor for type II membrane protein membrane-spanning segment; that stretch reads FICFAITSFSFFIALAIILGI. Over 104–1383 the chain is Extracellular; the sequence is SSKYAPDENC…ELLKQASKAH (1280 aa). Residues 121 to 245 enclose the G8 domain; the sequence is RNWDPGQDSA…RKASWTLLAR (125 aa). N-linked (GlcNAc...) asparagine glycosylation is found at asparagine 248 and asparagine 292. Residues 255 to 412 form the GG-type lectin 1 domain; that stretch reads GSYTFEKDFS…VSLSGFRVEV (158 aa). 3 PbH1 repeats span residues 669–691, 711–733, and 791–812; these read HPNN…WYLF, TPLG…FIDK, and GGDI…TFAS. Asparagine 914 and asparagine 1234 each carry an N-linked (GlcNAc...) asparagine glycan. One can recognise a GG-type lectin 2 domain in the interval 1208 to 1366; the sequence is KSYLPVQFQS…LDEYGCPRAT (159 aa).

Belongs to the CEMIP family. In terms of tissue distribution, widely expressed.

The protein localises to the cell membrane. It catalyses the reaction Random hydrolysis of (1-&gt;4)-linkages between N-acetyl-beta-D-glucosamine and D-glucuronate residues in hyaluronate.. In terms of biological role, cell surface hyaluronidase that mediates the initial cleavage of extracellular high-molecular-weight hyaluronan into intermediate-size hyaluronan of approximately 10-5 kDa fragments. Very specific to hyaluronan; not able to cleave chondroitin sulfate or dermatan sulfate. Has an essential function in systemic hyaluronan catabolism and turnover and regulates cell adhesion and migration via hyaluronan degradation at focal adhesion sites. Acts as a regulator of angiogenesis and heart morphogenesis by mediating degradation of extracellular hyaluronan, thereby regulating VEGF signaling. This chain is Cell surface hyaluronidase CEMIP2, found in Homo sapiens (Human).